The following is a 1282-amino-acid chain: Clustered mitochondria protein homolog (1282 aa).

The tract at residues 1–43 (MEQNNGTTEHPKEVLDQTNPSNEVTGVPNGNHAEGEGDQNAGE) is disordered. Residues 341–585 (DITRPQENYL…RITPLDVLWY (245 aa)) enclose the Clu domain. 2 stretches are compositionally biased toward basic and acidic residues: residues 631–641 (EAEEKAEESKP) and 653–669 (ESEK…RVDI). Disordered regions lie at residues 631 to 669 (EAEE…RVDI) and 892 to 936 (RSQL…PAPA). The span at 924–936 (QASPRPAQSPAPA) shows a compositional bias: low complexity. A TPR repeat occupies 1003–1036 (AKLYHQLSMLYYQSDDKDAAVELARKAVIVTERT). Residues 1202-1282 (ANLPTRLGTK…SKQSTVKPSS (81 aa)) form a disordered region. Residues 1212 to 1223 (PQPQVGQTTSEM) show a composition bias toward polar residues. The segment covering 1257–1272 (TKQKKRAAARNPKLRG) has biased composition (basic residues). Residues 1273 to 1282 (SKQSTVKPSS) show a composition bias toward polar residues.

Belongs to the CLU family. As to quaternary structure, may associate with the eukaryotic translation initiation factor 3 (eIF-3) complex.

Its subcellular location is the cytoplasm. Its function is as follows. mRNA-binding protein involved in proper cytoplasmic distribution of mitochondria. The chain is Clustered mitochondria protein homolog from Coccidioides immitis (strain RS) (Valley fever fungus).